The primary structure comprises 816 residues: H(+)/Cl(-) exchange transporter 5 (816 aa).

The disordered stretch occupies residues 1-26; it reads MAMWQGAMDNRGFQQGSFSSFQNSSS. Topologically, residues 1–124 are cytoplasmic; the sequence is MAMWQGAMDN…WALIHSVSDA (124 aa). The segment covering 12-25 has biased composition (low complexity); it reads GFQQGSFSSFQNSS. 2 helical membrane passes run 125–162 and 208–231; these read FSGWLLMLLIGLLSGSLAGLIDISAHWMTDLKEGICTG and VNYFMYVLWALLFAFLAVSLVKVF. The Selectivity filter part_1 signature appears at 237–241; it reads GSGIP. Chloride is bound at residue Ser-238. Positions 240 to 247 form an intramembrane region, helical; it reads IPEIKTIL. 2 helical membrane-spanning segments follow: residues 256 to 275 and 281 to 300; these read LGKWTLVIKTITLVLAVSSG and EGPLVHVACCCGNILCHCFN. Positions 279-283 match the Selectivity filter part_2 motif; sequence GKEGP. Intramembrane regions (helical) lie at residues 312–324 and 328–336; these read VLSAAAAAGVSVA and PIGGVLFSL. 5 helical membrane passes run 348 to 366, 389 to 415, 422 to 442, 498 to 518, and 523 to 542; these read LWRSFFAALVAAFTLRSIN, LVPFILLGIFGGLWGALFIRTNIAWCR, LGKYPVIEVLVVTAITAILAF, MWQLALTLILKIVITIFTFGM, and GLFIPSMAVGAIAGRLLGVG. Positions 523 to 527 match the Selectivity filter part_3 motif; that stretch reads GLFIP. Chloride is bound at residue Phe-525. Positions 570-584 form an intramembrane region, helical; the sequence is GLYAMVGAAACLGGV. Positions 585 to 587 form an intramembrane region, note=Loop between two helices; the sequence is TRM. The helical intramembrane region spans 588 to 599; that stretch reads TVSLVVIMFELT. Positions 600–604 form an intramembrane region, note=Loop between two helices; the sequence is GGLEY. A helical membrane pass occupies residues 605–622; it reads IVPLMAAAMTSKWVADAL. Topologically, residues 623-816 are cytoplasmic; sequence GREGIYDAHI…NQDPDSILFN (194 aa). A chloride-binding site is contributed by Tyr-628. CBS domains lie at 656 to 720 and 752 to 812; these read MKPR…ARKK and ILDL…DPDS. ATP-binding positions include Thr-666, 687–689, and 794–797; these read YSG and TKKD.

The protein belongs to the chloride channel (TC 2.A.49) family. ClC-5/CLCN5 subfamily. Interacts with NEDD4 and NEDD4L. In terms of processing, ubiquitinated by NEDD4L in the presence of albumin; which promotes endocytosis and proteasomal degradation. In terms of tissue distribution, kidney. Moderately expressed in aortic vascular smooth muscle and endothelial cells, and at a slightly higher level in the coronary vascular smooth muscle.

It localises to the golgi apparatus membrane. The protein localises to the endosome membrane. Its subcellular location is the cell membrane. It catalyses the reaction 2 chloride(in) + H(+)(out) = 2 chloride(out) + H(+)(in). Proton-coupled chloride transporter. Functions as antiport system and exchanges chloride ions against protons. Important for normal acidification of the endosome lumen. May play an important role in renal tubular function. The CLC channel family contains both chloride channels and proton-coupled anion transporters that exchange chloride or another anion for protons. The absence of conserved gating glutamate residues is typical for family members that function as channels. The polypeptide is H(+)/Cl(-) exchange transporter 5 (Homo sapiens (Human)).